Here is a 573-residue protein sequence, read N- to C-terminus: 60 kDa heat shock protein, mitochondrial (573 aa).

The transit peptide at 1 to 26 directs the protein to the mitochondrion; that stretch reads MLRLPTVLRQMRPVSRALAPHLTRAY. K31 carries the N6-succinyllysine modification. 2 positions are modified to phosphoserine: S67 and S70. ATP is bound at residue K75. The residue at position 75 (K75) is an N6-acetyllysine. Residue K82 is modified to N6-acetyllysine; alternate. K82 carries the post-translational modification N6-succinyllysine; alternate. K87 is modified (N6-acetyllysine). A Phosphotyrosine modification is found at Y90. K91 carries the post-translational modification N6-acetyllysine. 111 to 115 lines the ATP pocket; that stretch reads DGTTT. At K125 the chain carries N6-acetyllysine; alternate. K125 bears the N6-succinyllysine; alternate mark. K130 is subject to N6-acetyllysine. Residue K133 is modified to N6-acetyllysine; alternate. K133 carries the N6-succinyllysine; alternate modification. At K133 the chain carries N6-malonyllysine; alternate. K156 bears the N6-acetyllysine mark. K191, K202, K205, K218, and K236 each carry N6-acetyllysine; alternate. 5 positions are modified to N6-succinyllysine; alternate: K191, K202, K205, K218, and K236. Position 249 is an N6-acetyllysine (K249). Residue K250 is modified to N6-acetyllysine; alternate. An N6-succinyllysine; alternate modification is found at K250. N6-acetyllysine is present on residues K269 and K292. At K301 the chain carries N6-succinyllysine. Position 314 is an N6-acetyllysine (K314). N6-acetyllysine; alternate is present on K352. An N6-succinyllysine; alternate modification is found at K352. K359 and K389 each carry N6-acetyllysine. Residue K396 is modified to N6-acetyllysine; alternate. At K396 the chain carries N6-succinyllysine; alternate. A Phosphoserine modification is found at S410. G440 is a binding site for ATP. The residue at position 455 (K455) is an N6-acetyllysine; alternate. At K455 the chain carries N6-succinyllysine; alternate. K469 carries the N6-acetyllysine modification. K481 carries the N6-acetyllysine; alternate modification. Position 481 is an N6-succinyllysine; alternate (K481). S488 carries the post-translational modification Phosphoserine. ATP is bound at residue D520. A Glycyl lysine isopeptide (Lys-Gly) (interchain with G-Cter in SUMO2) cross-link involves residue K551.

The protein belongs to the chaperonin (HSP60) family. As to quaternary structure, homoheptamer arranged in a ring structure. The functional units of these chaperonins consist of heptameric rings of the large subunit Hsp60, which function as a back-to-back double ring. Interacts with 2 heptameric Hsp10 rings to form the symmetrical football complex. Interacts with HRAS. Interacts with ATAD3A. Interacts with ETFBKMT and EEF1AKMT3. Interacts with MFHAS1.

The protein localises to the mitochondrion matrix. The catalysed reaction is ATP + H2O + a folded polypeptide = ADP + phosphate + an unfolded polypeptide.. Chaperonin implicated in mitochondrial protein import and macromolecular assembly. Together with Hsp10, facilitates the correct folding of imported proteins. May also prevent misfolding and promote the refolding and proper assembly of unfolded polypeptides generated under stress conditions in the mitochondrial matrix. The functional units of these chaperonins consist of heptameric rings of the large subunit Hsp60, which function as a back-to-back double ring. In a cyclic reaction, Hsp60 ring complexes bind one unfolded substrate protein per ring, followed by the binding of ATP and association with 2 heptameric rings of the co-chaperonin Hsp10. This leads to sequestration of the substrate protein in the inner cavity of Hsp60 where, for a certain period of time, it can fold undisturbed by other cell components. Synchronous hydrolysis of ATP in all Hsp60 subunits results in the dissociation of the chaperonin rings and the release of ADP and the folded substrate protein. This chain is 60 kDa heat shock protein, mitochondrial (HSPD1), found in Cricetulus griseus (Chinese hamster).